We begin with the raw amino-acid sequence, 130 residues long: Small ribosomal subunit protein uS11 (130 aa).

It belongs to the universal ribosomal protein uS11 family. Part of the 30S ribosomal subunit. Interacts with proteins S7 and S18. Binds to IF-3.

In terms of biological role, located on the platform of the 30S subunit, it bridges several disparate RNA helices of the 16S rRNA. Forms part of the Shine-Dalgarno cleft in the 70S ribosome. This Xanthomonas campestris pv. campestris (strain B100) protein is Small ribosomal subunit protein uS11.